Here is a 202-residue protein sequence, read N- to C-terminus: uncharacterized protein (202 aa).

Residues 13–73 (ELAADRILDA…AYVHRETRRL (61 aa)) enclose the HTH tetR-type domain. Positions 36-55 (GMNEIAKAAGCSRATLYRYF) form a DNA-binding region, H-T-H motif.

This is an uncharacterized protein from Mycobacterium tuberculosis (strain CDC 1551 / Oshkosh).